The sequence spans 518 residues: Bifunctional purine biosynthesis protein PurH (518 aa).

One can recognise an MGS-like domain in the interval 1-146 (MARIALISVS…KNHESVSILT (146 aa)).

It belongs to the PurH family.

It catalyses the reaction (6R)-10-formyltetrahydrofolate + 5-amino-1-(5-phospho-beta-D-ribosyl)imidazole-4-carboxamide = 5-formamido-1-(5-phospho-D-ribosyl)imidazole-4-carboxamide + (6S)-5,6,7,8-tetrahydrofolate. It carries out the reaction IMP + H2O = 5-formamido-1-(5-phospho-D-ribosyl)imidazole-4-carboxamide. Its pathway is purine metabolism; IMP biosynthesis via de novo pathway; 5-formamido-1-(5-phospho-D-ribosyl)imidazole-4-carboxamide from 5-amino-1-(5-phospho-D-ribosyl)imidazole-4-carboxamide (10-formyl THF route): step 1/1. It functions in the pathway purine metabolism; IMP biosynthesis via de novo pathway; IMP from 5-formamido-1-(5-phospho-D-ribosyl)imidazole-4-carboxamide: step 1/1. This chain is Bifunctional purine biosynthesis protein PurH, found in Prochlorococcus marinus (strain MIT 9211).